Reading from the N-terminus, the 284-residue chain is Bifunctional protein FolD (284 aa).

Residues 165-167 (GRS), S190, and V231 contribute to the NADP(+) site.

Belongs to the tetrahydrofolate dehydrogenase/cyclohydrolase family. As to quaternary structure, homodimer.

The catalysed reaction is (6R)-5,10-methylene-5,6,7,8-tetrahydrofolate + NADP(+) = (6R)-5,10-methenyltetrahydrofolate + NADPH. It carries out the reaction (6R)-5,10-methenyltetrahydrofolate + H2O = (6R)-10-formyltetrahydrofolate + H(+). It functions in the pathway one-carbon metabolism; tetrahydrofolate interconversion. Catalyzes the oxidation of 5,10-methylenetetrahydrofolate to 5,10-methenyltetrahydrofolate and then the hydrolysis of 5,10-methenyltetrahydrofolate to 10-formyltetrahydrofolate. This Geobacillus kaustophilus (strain HTA426) protein is Bifunctional protein FolD.